A 229-amino-acid polypeptide reads, in one-letter code: Potassium/proton antiporter CemA (229 aa).

The next 3 helical transmembrane spans lie at Phe7 to Phe27, Ile107 to Gly127, and Ile189 to Ile209.

It belongs to the CemA family.

The protein resides in the plastid. Its subcellular location is the chloroplast inner membrane. It carries out the reaction K(+)(in) + H(+)(out) = K(+)(out) + H(+)(in). Its function is as follows. Contributes to K(+)/H(+) antiport activity by supporting proton efflux to control proton extrusion and homeostasis in chloroplasts in a light-dependent manner to modulate photosynthesis. Prevents excessive induction of non-photochemical quenching (NPQ) under continuous-light conditions. Indirectly promotes efficient inorganic carbon uptake into chloroplasts. This Helianthus annuus (Common sunflower) protein is Potassium/proton antiporter CemA.